Here is a 203-residue protein sequence, read N- to C-terminus: MAGEIPDFQAEVRTGTGKGAARQARREGYVPGIVYGGGQEPLSINVPYNDLLNRLKKGRFLQTLFNLKVEGQEDVRVICRGVQRDVVKDLPTHVDFMRLRRTSRVNLFIHVTFENHDKAPGLKRGGTLTVVRPEVELEVTAGDIPDHLTVDLTDRQIGDVIHINDIKLPEGAVPTINRNFVIANISAPSGLRSSDNEEEAEEA.

Belongs to the bacterial ribosomal protein bL25 family. CTC subfamily. As to quaternary structure, part of the 50S ribosomal subunit; part of the 5S rRNA/L5/L18/L25 subcomplex. Contacts the 5S rRNA. Binds to the 5S rRNA independently of L5 and L18.

This is one of the proteins that binds to the 5S RNA in the ribosome where it forms part of the central protuberance. This Cereibacter sphaeroides (strain ATCC 17029 / ATH 2.4.9) (Rhodobacter sphaeroides) protein is Large ribosomal subunit protein bL25.